A 489-amino-acid chain; its full sequence is Tripartite motif-containing protein 10 (489 aa).

The RING-type zinc finger occupies 16–61 (CPVCQGTLREPVTIDCGHNFCRVCLTRYLEITSPDPEEPPTCPLCK). Residues 94 to 135 (DEEDVCPEHGEKVYFFCEDDEMQLCVVCREAWEHRAHTVRFL) form a B box-type zinc finger. Zn(2+)-binding residues include C99, H102, C121, and H127. The stretch at 142–245 (YREQIQKCLE…IEELEEKKER (104 aa)) forms a coiled coil. The region spanning 292 to 486 (REMKMFLEKL…FSLSSQEGAA (195 aa)) is the B30.2/SPRY domain.

It belongs to the TRIM/RBCC family. Interacts with IFNAR1; this interaction prevents association of IFNAR1 with TYK2.

Its subcellular location is the cytoplasm. Its function is as follows. E3 ligase that plays an essential role in the differentiation and survival of terminal erythroid cells. May directly bind to PTEN and promote its ubiquitination, resulting in its proteasomal degradation and activation of hypertrophic signaling. In addition, plays a role in immune response regulation by repressing the phosphorylation of STAT1 and STAT2 in the interferon/JAK/STAT signaling pathway independent of its E3 ligase activity. Mechanistically, interacts with the intracellular domain of IFNAR1 and thereby inhibits the association between TYK2 and IFNAR1. In Bos taurus (Bovine), this protein is Tripartite motif-containing protein 10 (TRIM10).